Consider the following 317-residue polypeptide: Protoheme IX farnesyltransferase (317 aa).

Transmembrane regions (helical) follow at residues 25–45 (FFALLKPRVMALVIFTALVGM), 54–74 (PVIAAVSLLMIAVGAGASGCL), 126–146 (LAAGLLAFTIAFYAVIYSMWL), 154–174 (IVIGGAAGALPPMIGQAVVTG), 181–201 (LVLFLIIFVWTPPHFWALALV), 227–244 (IVAYTLLLAPLGLAPVAL), 249–271 (LIYGLVALLGGLAMLALSLQVYH), and 281–301 (AAMGLFGFSILYLFLLFSALL).

The protein belongs to the UbiA prenyltransferase family. Protoheme IX farnesyltransferase subfamily.

Its subcellular location is the cell inner membrane. It catalyses the reaction heme b + (2E,6E)-farnesyl diphosphate + H2O = Fe(II)-heme o + diphosphate. It functions in the pathway porphyrin-containing compound metabolism; heme O biosynthesis; heme O from protoheme: step 1/1. Functionally, converts heme B (protoheme IX) to heme O by substitution of the vinyl group on carbon 2 of heme B porphyrin ring with a hydroxyethyl farnesyl side group. This Methylobacterium sp. (strain 4-46) protein is Protoheme IX farnesyltransferase.